Here is a 213-residue protein sequence, read N- to C-terminus: LexA repressor (213 aa).

Positions 29 to 49 (RAEIAQALGFRSPNAAEDHLK) form a DNA-binding region, H-T-H motif. Residues serine 131 and lysine 168 each act as for autocatalytic cleavage activity in the active site.

Belongs to the peptidase S24 family. Homodimer.

The catalysed reaction is Hydrolysis of Ala-|-Gly bond in repressor LexA.. Functionally, represses a number of genes involved in the response to DNA damage (SOS response), including recA and lexA. In the presence of single-stranded DNA, RecA interacts with LexA causing an autocatalytic cleavage which disrupts the DNA-binding part of LexA, leading to derepression of the SOS regulon and eventually DNA repair. The chain is LexA repressor from Bordetella avium (strain 197N).